The following is a 230-amino-acid chain: Orotidine 5'-phosphate decarboxylase (230 aa).

Substrate is bound by residues aspartate 11, lysine 34, aspartate 61 to threonine 70, threonine 117, arginine 179, glutamine 188, glycine 208, and arginine 209. Lysine 63 (proton donor) is an active-site residue.

The protein belongs to the OMP decarboxylase family. Type 1 subfamily. As to quaternary structure, homodimer.

The enzyme catalyses orotidine 5'-phosphate + H(+) = UMP + CO2. Its pathway is pyrimidine metabolism; UMP biosynthesis via de novo pathway; UMP from orotate: step 2/2. In terms of biological role, catalyzes the decarboxylation of orotidine 5'-monophosphate (OMP) to uridine 5'-monophosphate (UMP). The sequence is that of Orotidine 5'-phosphate decarboxylase from Streptococcus equi subsp. zooepidemicus (strain H70).